Here is a 238-residue protein sequence, read N- to C-terminus: Probable xyloglucan-specific endo-beta-1,4-glucanase A (238 aa).

Residues 1–18 (MKFSLSVALSLAAATAQA) form the signal peptide. Residues Asn106 and Asn171 are each glycosylated (N-linked (GlcNAc...) asparagine).

Belongs to the glycosyl hydrolase 12 (cellulase H) family.

The protein resides in the secreted. It catalyses the reaction xyloglucan + H2O = xyloglucan oligosaccharides.. In terms of biological role, catalyzes endohydrolysis of 1,4-beta-D-glucosidic linkages in xyloglucan with retention of the beta-configuration of the glycosyl residues. Specific for xyloglucan and does not hydrolyze other cell wall components. This chain is Probable xyloglucan-specific endo-beta-1,4-glucanase A (xgeA), found in Neosartorya fischeri (strain ATCC 1020 / DSM 3700 / CBS 544.65 / FGSC A1164 / JCM 1740 / NRRL 181 / WB 181) (Aspergillus fischerianus).